The primary structure comprises 255 residues: Formate hydrogenlyase subunit 7 (255 aa).

[4Fe-4S] cluster is bound by residues cysteine 45, cysteine 51, cysteine 115, and cysteine 145.

Belongs to the complex I 20 kDa subunit family. FHL comprises of a formate dehydrogenase, unidentified electron carriers and a hydrogenase (isoenzyme 3). In this non-energy conserving pathway molecular hydrogen and carbodioxide from formate are released. [4Fe-4S] cluster is required as a cofactor.

The polypeptide is Formate hydrogenlyase subunit 7 (hycG) (Escherichia coli (strain K12)).